A 446-amino-acid chain; its full sequence is Adenylosuccinate synthetase (446 aa).

Residues 21-27 (GDEGKGK) and 49-51 (GHT) each bind GTP. Aspartate 22 acts as the Proton acceptor in catalysis. Residues aspartate 22 and glycine 49 each contribute to the Mg(2+) site. IMP-binding positions include 22–25 (DEGK), 47–50 (NAGH), threonine 141, arginine 155, glutamine 236, threonine 251, and arginine 319. The active-site Proton donor is the histidine 50. Position 315-321 (315-321 (VTTGRSR)) interacts with substrate. GTP is bound by residues arginine 321, 347 to 349 (KLD), and 429 to 431 (STS).

This sequence belongs to the adenylosuccinate synthetase family. Homodimer. Mg(2+) is required as a cofactor.

It is found in the cytoplasm. The catalysed reaction is IMP + L-aspartate + GTP = N(6)-(1,2-dicarboxyethyl)-AMP + GDP + phosphate + 2 H(+). The protein operates within purine metabolism; AMP biosynthesis via de novo pathway; AMP from IMP: step 1/2. In terms of biological role, plays an important role in the de novo pathway of purine nucleotide biosynthesis. Catalyzes the first committed step in the biosynthesis of AMP from IMP. The sequence is that of Adenylosuccinate synthetase from Polaromonas naphthalenivorans (strain CJ2).